A 457-amino-acid polypeptide reads, in one-letter code: Exodeoxyribonuclease 7 large subunit (457 aa).

The protein belongs to the XseA family. In terms of assembly, heterooligomer composed of large and small subunits.

It localises to the cytoplasm. It carries out the reaction Exonucleolytic cleavage in either 5'- to 3'- or 3'- to 5'-direction to yield nucleoside 5'-phosphates.. In terms of biological role, bidirectionally degrades single-stranded DNA into large acid-insoluble oligonucleotides, which are then degraded further into small acid-soluble oligonucleotides. In Photorhabdus laumondii subsp. laumondii (strain DSM 15139 / CIP 105565 / TT01) (Photorhabdus luminescens subsp. laumondii), this protein is Exodeoxyribonuclease 7 large subunit.